The chain runs to 243 residues: Putative ABC transporter arginine-binding protein 2 (243 aa).

Residues 1-19 (MKKVLIAALIAGFSLSATA) form the signal peptide.

Belongs to the bacterial solute-binding protein 3 family. As to quaternary structure, the complex is composed of two ATP-binding proteins (ArtP), two transmembrane proteins (ArtM and ArtQ) and two solute-binding proteins (ArtJ and ArtI).

It is found in the periplasm. In terms of biological role, part of the ABC transporter complex ArtPIQMJ involved in arginine transport. The polypeptide is Putative ABC transporter arginine-binding protein 2 (artI) (Escherichia coli (strain K12)).